We begin with the raw amino-acid sequence, 74 residues long: MKRDIHPEYVETQVSCTCGASFTTRSTIESGTIRAEVCSECHPFYTGKQKILDTGGRVARFEARFGKASAGSKK.

4 residues coordinate Zn(2+): C16, C18, C38, and C41.

It belongs to the bacterial ribosomal protein bL31 family. Type A subfamily. Part of the 50S ribosomal subunit. Requires Zn(2+) as cofactor.

Functionally, binds the 23S rRNA. The protein is Large ribosomal subunit protein bL31 (rpmE) of Streptomyces coelicolor (strain ATCC BAA-471 / A3(2) / M145).